The chain runs to 47 residues: Large ribosomal subunit protein bL34 (47 aa).

This sequence belongs to the bacterial ribosomal protein bL34 family.

In Mycobacteroides abscessus (strain ATCC 19977 / DSM 44196 / CCUG 20993 / CIP 104536 / JCM 13569 / NCTC 13031 / TMC 1543 / L948) (Mycobacterium abscessus), this protein is Large ribosomal subunit protein bL34.